The chain runs to 127 residues: EF-hand calcium-binding domain-containing protein 10 (127 aa).

The EF-hand domain maps to 63-98 (MDNSNIVAMFEMMDSSGRGTISFVQYKEALKTLGLC).

This chain is EF-hand calcium-binding domain-containing protein 10 (EFCAB10), found in Homo sapiens (Human).